We begin with the raw amino-acid sequence, 232 residues long: LexA repressor (232 aa).

The interval 1–25 (MSDDSSDSTSGAGSGRGRDSGLTER) is disordered. Basic and acidic residues predominate over residues 16–25 (RGRDSGLTER). Residues 46–66 (IREIGDAVGLTSTSSVAHQLR) constitute a DNA-binding region (H-T-H motif). Active-site for autocatalytic cleavage activity residues include S156 and K193.

It belongs to the peptidase S24 family. As to quaternary structure, homodimer.

It carries out the reaction Hydrolysis of Ala-|-Gly bond in repressor LexA.. Functionally, represses a number of genes involved in the response to DNA damage (SOS response), including recA and lexA. In the presence of single-stranded DNA, RecA interacts with LexA causing an autocatalytic cleavage which disrupts the DNA-binding part of LexA, leading to derepression of the SOS regulon and eventually DNA repair. This chain is LexA repressor, found in Mycolicibacterium vanbaalenii (strain DSM 7251 / JCM 13017 / BCRC 16820 / KCTC 9966 / NRRL B-24157 / PYR-1) (Mycobacterium vanbaalenii).